Consider the following 273-residue polypeptide: NH(3)-dependent NAD(+) synthetase (273 aa).

47-54 serves as a coordination point for ATP; the sequence is GISGGQDS. Aspartate 53 lines the Mg(2+) pocket. Position 139 (arginine 139) interacts with deamido-NAD(+). Threonine 159 contributes to the ATP binding site. Glutamate 164 contributes to the Mg(2+) binding site. Deamido-NAD(+)-binding residues include lysine 172 and aspartate 179. Lysine 188 and threonine 210 together coordinate ATP. Deamido-NAD(+) is bound at residue 259–260; that stretch reads HK.

Belongs to the NAD synthetase family. As to quaternary structure, homodimer.

The catalysed reaction is deamido-NAD(+) + NH4(+) + ATP = AMP + diphosphate + NAD(+) + H(+). It functions in the pathway cofactor biosynthesis; NAD(+) biosynthesis; NAD(+) from deamido-NAD(+) (ammonia route): step 1/1. Its function is as follows. Catalyzes the ATP-dependent amidation of deamido-NAD to form NAD. Uses ammonia as a nitrogen source. This chain is NH(3)-dependent NAD(+) synthetase, found in Staphylococcus saprophyticus subsp. saprophyticus (strain ATCC 15305 / DSM 20229 / NCIMB 8711 / NCTC 7292 / S-41).